A 437-amino-acid chain; its full sequence is GTPase Obg (437 aa).

The region spanning 2–160 is the Obg domain; that stretch reads SMFLDTAKIS…RQLELELKIL (159 aa). An OBG-type G domain is found at 161–338; sequence ADVGLVGFPS…LLEATAELLA (178 aa). GTP-binding positions include 167 to 174, 192 to 196, 214 to 217, 284 to 287, and 319 to 321; these read GFPSVGKS, FTTIV, DLPG, NKMD, and SSL. S174 and T194 together coordinate Mg(2+). One can recognise an OCT domain in the interval 359 to 437; it reads GFAETEKNFE…IGKFEFEFVD (79 aa).

It belongs to the TRAFAC class OBG-HflX-like GTPase superfamily. OBG GTPase family. As to quaternary structure, monomer. The cofactor is Mg(2+).

The protein resides in the cytoplasm. An essential GTPase which binds GTP, GDP and possibly (p)ppGpp with moderate affinity, with high nucleotide exchange rates and a fairly low GTP hydrolysis rate. Plays a role in control of the cell cycle, stress response, ribosome biogenesis and in those bacteria that undergo differentiation, in morphogenesis control. The protein is GTPase Obg of Streptococcus pyogenes serotype M49 (strain NZ131).